A 383-amino-acid polypeptide reads, in one-letter code: Galactokinase (383 aa).

Residue 34–37 (EHTD) coordinates substrate. Residue 124 to 130 (GAGLSSS) coordinates ATP. Ser-130 and Glu-162 together coordinate Mg(2+). Asp-174 serves as the catalytic Proton acceptor. Residue Tyr-223 participates in substrate binding.

This sequence belongs to the GHMP kinase family. GalK subfamily.

Its subcellular location is the cytoplasm. It catalyses the reaction alpha-D-galactose + ATP = alpha-D-galactose 1-phosphate + ADP + H(+). It functions in the pathway carbohydrate metabolism; galactose metabolism. Catalyzes the transfer of the gamma-phosphate of ATP to D-galactose to form alpha-D-galactose-1-phosphate (Gal-1-P). The protein is Galactokinase of Yersinia enterocolitica serotype O:8 / biotype 1B (strain NCTC 13174 / 8081).